A 378-amino-acid polypeptide reads, in one-letter code: Carbamoyl phosphate synthase small chain (378 aa).

The tract at residues 1 to 188 is CPSase; that stretch reads MLPSFPPAIL…LGRGYGVQDK (188 aa). L-glutamine is bound by residues S50, G240, and G242. In terms of domain architecture, Glutamine amidotransferase type-1 spans 192 to 378; it reads HVVAYDFGVK…FTAAMAERKQ (187 aa). Catalysis depends on C268, which acts as the Nucleophile. L269, Q272, N310, G312, and F313 together coordinate L-glutamine. Active-site residues include H352 and E354.

This sequence belongs to the CarA family. In terms of assembly, composed of two chains; the small (or glutamine) chain promotes the hydrolysis of glutamine to ammonia, which is used by the large (or ammonia) chain to synthesize carbamoyl phosphate. Tetramer of heterodimers (alpha,beta)4.

It catalyses the reaction hydrogencarbonate + L-glutamine + 2 ATP + H2O = carbamoyl phosphate + L-glutamate + 2 ADP + phosphate + 2 H(+). The enzyme catalyses L-glutamine + H2O = L-glutamate + NH4(+). It functions in the pathway amino-acid biosynthesis; L-arginine biosynthesis; carbamoyl phosphate from bicarbonate: step 1/1. The protein operates within pyrimidine metabolism; UMP biosynthesis via de novo pathway; (S)-dihydroorotate from bicarbonate: step 1/3. In terms of biological role, small subunit of the glutamine-dependent carbamoyl phosphate synthetase (CPSase). CPSase catalyzes the formation of carbamoyl phosphate from the ammonia moiety of glutamine, carbonate, and phosphate donated by ATP, constituting the first step of 2 biosynthetic pathways, one leading to arginine and/or urea and the other to pyrimidine nucleotides. The small subunit (glutamine amidotransferase) binds and cleaves glutamine to supply the large subunit with the substrate ammonia. This is Carbamoyl phosphate synthase small chain from Ralstonia nicotianae (strain ATCC BAA-1114 / GMI1000) (Ralstonia solanacearum).